The following is a 156-amino-acid chain: ATP synthase subunit b (156 aa).

Residues 5–25 (LTLIGQAIAFAFFVAFCMKFV) traverse the membrane as a helical segment.

Belongs to the ATPase B chain family. F-type ATPases have 2 components, F(1) - the catalytic core - and F(0) - the membrane proton channel. F(1) has five subunits: alpha(3), beta(3), gamma(1), delta(1), epsilon(1). F(0) has three main subunits: a(1), b(2) and c(10-14). The alpha and beta chains form an alternating ring which encloses part of the gamma chain. F(1) is attached to F(0) by a central stalk formed by the gamma and epsilon chains, while a peripheral stalk is formed by the delta and b chains.

The protein localises to the cell inner membrane. In terms of biological role, f(1)F(0) ATP synthase produces ATP from ADP in the presence of a proton or sodium gradient. F-type ATPases consist of two structural domains, F(1) containing the extramembraneous catalytic core and F(0) containing the membrane proton channel, linked together by a central stalk and a peripheral stalk. During catalysis, ATP synthesis in the catalytic domain of F(1) is coupled via a rotary mechanism of the central stalk subunits to proton translocation. Its function is as follows. Component of the F(0) channel, it forms part of the peripheral stalk, linking F(1) to F(0). This is ATP synthase subunit b from Acinetobacter baumannii (strain SDF).